Here is a 666-residue protein sequence, read N- to C-terminus: Phosphoenolpyruvate carboxykinase (ATP) (666 aa).

2 disordered regions span residues 1–68 (MATP…AHSP) and 91–132 (ASLT…HPAA). The span at 48 to 58 (APTTPNRSAPT) shows a compositional bias: polar residues. Over residues 109–123 (KGEAAAQGAPSTPRA) the composition is skewed to low complexity. 364 to 371 (GLSGTGKT) contacts ATP.

Belongs to the phosphoenolpyruvate carboxykinase (ATP) family.

It is found in the cytoplasm. It carries out the reaction oxaloacetate + ATP = phosphoenolpyruvate + ADP + CO2. It functions in the pathway carbohydrate biosynthesis; gluconeogenesis. The chain is Phosphoenolpyruvate carboxykinase (ATP) from Zea mays (Maize).